The chain runs to 149 residues: Deoxyuridine 5'-triphosphate nucleotidohydrolase (149 aa).

Residues 68 to 70 (RSG), Asn-81, 85 to 87 (TVD), and Lys-95 contribute to the substrate site.

It belongs to the dUTPase family. The cofactor is Mg(2+).

It catalyses the reaction dUTP + H2O = dUMP + diphosphate + H(+). The protein operates within pyrimidine metabolism; dUMP biosynthesis; dUMP from dCTP (dUTP route): step 2/2. In terms of biological role, this enzyme is involved in nucleotide metabolism: it produces dUMP, the immediate precursor of thymidine nucleotides and it decreases the intracellular concentration of dUTP so that uracil cannot be incorporated into DNA. The protein is Deoxyuridine 5'-triphosphate nucleotidohydrolase of Neorickettsia sennetsu (strain ATCC VR-367 / Miyayama) (Ehrlichia sennetsu).